Here is a 620-residue protein sequence, read N- to C-terminus: Cryptochrome-1 (620 aa).

One can recognise a Photolyase/cryptochrome alpha/beta domain in the interval valine 3–leucine 132. 3 short sequence motifs (LIR) span residues asparagine 50–phenylalanine 54, aspartate 82–leucine 87, and lysine 151–leucine 156. Serine 252 serves as a coordination point for FAD. 4 short sequence motifs (LIR) span residues leucine 255–leucine 260, aspartate 271–valine 276, serine 285–leucine 290, and threonine 335–tryptophan 339. Glutamine 289 provides a ligand contact to FAD. Histidine 355 lines the FAD pocket. The LIR 8 signature appears at lysine 379–leucine 384. Residue aspartate 387 to aspartate 389 participates in FAD binding. Short sequence motifs (LIR) lie at residues glycine 395 to leucine 400, histidine 411 to valine 416, arginine 430 to valine 435, glutamine 486 to leucine 491, and serine 492 to leucine 497. A disordered region spans residues glycine 592 to asparagine 620.

This sequence belongs to the DNA photolyase class-1 family. In terms of assembly, component of the circadian core oscillator, which includes the CRY proteins, CLOCK or NPAS2, BMAL1 or BMAL2, CSNK1E, and the PER proteins. The cofactor is FAD. (6R)-5,10-methylene-5,6,7,8-tetrahydrofolate serves as cofactor. In terms of tissue distribution, expressed in the retina. High levels found in ganglion cells of the retina.

It is found in the cytoplasm. The protein localises to the nucleus. Functionally, transcriptional repressor which forms a core component of the circadian clock. The circadian clock, an internal time-keeping system, regulates various physiological processes through the generation of approximately 24 hour circadian rhythms in gene expression, which are translated into rhythms in metabolism and behavior. It is derived from the Latin roots 'circa' (about) and 'diem' (day) and acts as an important regulator of a wide array of physiological functions including metabolism, sleep, body temperature, blood pressure, endocrine, immune, cardiovascular, and renal function. Consists of two major components: the central clock, residing in the suprachiasmatic nucleus (SCN) of the brain, and the peripheral clocks that are present in nearly every tissue and organ system. Both the central and peripheral clocks can be reset by environmental cues, also known as Zeitgebers (German for 'timegivers'). The predominant Zeitgeber for the central clock is light, which is sensed by retina and signals directly to the SCN. The central clock entrains the peripheral clocks through neuronal and hormonal signals, body temperature and feeding-related cues, aligning all clocks with the external light/dark cycle. Circadian rhythms allow an organism to achieve temporal homeostasis with its environment at the molecular level by regulating gene expression to create a peak of protein expression once every 24 hours to control when a particular physiological process is most active with respect to the solar day. Transcription and translation of core clock components (CLOCK, NPAS2, BMAL1, BMAL2, PER1, PER2, PER3, CRY1 and CRY2) plays a critical role in rhythm generation, whereas delays imposed by post-translational modifications (PTMs) are important for determining the period (tau) of the rhythms (tau refers to the period of a rhythm and is the length, in time, of one complete cycle). A diurnal rhythm is synchronized with the day/night cycle, while the ultradian and infradian rhythms have a period shorter and longer than 24 hours, respectively. Disruptions in the circadian rhythms contribute to the pathology of cardiovascular diseases, cancer, metabolic syndromes and aging. A transcription/translation feedback loop (TTFL) forms the core of the molecular circadian clock mechanism. Transcription factors, CLOCK or NPAS2 and BMAL1 or BMAL2, form the positive limb of the feedback loop, act in the form of a heterodimer and activate the transcription of core clock genes and clock-controlled genes (involved in key metabolic processes), harboring E-box elements (5'-CACGTG-3') within their promoters. The core clock genes: PER1/2/3 and CRY1/2 which are transcriptional repressors form the negative limb of the feedback loop and interact with the CLOCK|NPAS2-BMAL1|BMAL2 heterodimer inhibiting its activity and thereby negatively regulating their own expression. This heterodimer also activates nuclear receptors NR1D1, NR1D2, RORA, RORB and RORG, which form a second feedback loop and which activate and repress BMAL1 transcription, respectively. CRY1 and CRY2 have redundant functions but also differential and selective contributions at least in defining the pace of the SCN circadian clock and its circadian transcriptional outputs. More potent transcriptional repressor in cerebellum and liver than CRY2, though more effective in lengthening the period of the SCN oscillator. On its side, CRY2 seems to play a critical role in tuning SCN circadian period by opposing the action of CRY1. With CRY2, is dispensable for circadian rhythm generation but necessary for the development of intercellular networks for rhythm synchrony. Capable of translocating circadian clock core proteins such as PER proteins to the nucleus. Interacts with CLOCK:BMAL1 independently of PER proteins and is found at CLOCK:BMAL1-bound sites, suggesting that CRY may act as a molecular gatekeeper to maintain CLOCK:BMAL1 in a poised and repressed state until the proper time for transcriptional activation. In Sylvia borin (Garden warbler), this protein is Cryptochrome-1 (CRY1).